We begin with the raw amino-acid sequence, 21 residues long: Tertiapin (21 aa).

2 cysteine pairs are disulfide-bonded: C3/C14 and C5/C18.

In terms of processing, oxidation of Met-13 results in the loss of biological activity. An amidation at Lys-21 is suggested in Ref.1. In terms of tissue distribution, expressed by the venom gland.

It localises to the secreted. Functionally, presynaptic neurotoxin that blocks the inwardly rectifying Kir1.1/KCNJ1 and Kir3.1/3.4 (KCNJ3/KCNJ5) potassium channels with high affinity by binding to the M1-M2 linker region of these channels in a 1:1 stoichiometry. It may block the potassium channel pore by occluding its alpha helix into the channel vestibule. Tertiapin-Q also inhibits calcium-activated large conductance BK-type (KCNMA) potassium channels in a concentration-, and voltage-dependent manner, in addition to inhibiting Kir3.1/3.2 (KCNJ3/KCNJ6) heteromultimers potassium channels. It can prevent dose-dependently acetylcholine(ACh)-induced atrioventricular blocks in mammalian hearts, as KCNJ3/KCNJ5 channels (also named I(KACh), because these channels are activated by ACh) are found in mammalian myocytes. Interacts specifically with calmodulin in the presence of calcium. In Apis mellifera (Honeybee), this protein is Tertiapin.